Consider the following 740-residue polypeptide: NAD(P)H-quinone oxidoreductase subunit 5, chloroplastic (740 aa).

17 helical membrane-spanning segments follow: residues 9–29 (WIIP…LLVV), 40–60 (WAFI…NISI), 89–109 (IDSL…MVLI), 125–145 (FAYL…SNLI), 147–167 (IYIF…FWFT), 185–205 (GDFG…SFEF), 219–239 (NTIN…GAIA), 258–278 (TPIS…FLVA), 290–310 (IMYF…TLAL), 327–347 (LGYI…FHLI), 354–374 (ALLF…VGYS), 396–416 (TTFL…CFWS), 425–445 (WLYS…TAFY), 521–538 (MFSF…PYPH), 545–565 (LLSV…GIPL), 599–619 (FVIN…IASF), and 720–740 (YLFV…YFVL).

The protein belongs to the complex I subunit 5 family. As to quaternary structure, NDH is composed of at least 16 different subunits, 5 of which are encoded in the nucleus.

The protein localises to the plastid. Its subcellular location is the chloroplast thylakoid membrane. It catalyses the reaction a plastoquinone + NADH + (n+1) H(+)(in) = a plastoquinol + NAD(+) + n H(+)(out). It carries out the reaction a plastoquinone + NADPH + (n+1) H(+)(in) = a plastoquinol + NADP(+) + n H(+)(out). NDH shuttles electrons from NAD(P)H:plastoquinone, via FMN and iron-sulfur (Fe-S) centers, to quinones in the photosynthetic chain and possibly in a chloroplast respiratory chain. The immediate electron acceptor for the enzyme in this species is believed to be plastoquinone. Couples the redox reaction to proton translocation, and thus conserves the redox energy in a proton gradient. The sequence is that of NAD(P)H-quinone oxidoreductase subunit 5, chloroplastic (ndhF) from Piper cenocladum (Ant piper).